A 236-amino-acid chain; its full sequence is 2-C-methyl-D-erythritol 4-phosphate cytidylyltransferase (236 aa).

The protein belongs to the IspD/TarI cytidylyltransferase family. IspD subfamily. Homodimer.

The catalysed reaction is 2-C-methyl-D-erythritol 4-phosphate + CTP + H(+) = 4-CDP-2-C-methyl-D-erythritol + diphosphate. The protein operates within isoprenoid biosynthesis; isopentenyl diphosphate biosynthesis via DXP pathway; isopentenyl diphosphate from 1-deoxy-D-xylulose 5-phosphate: step 2/6. Catalyzes the formation of 4-diphosphocytidyl-2-C-methyl-D-erythritol from CTP and 2-C-methyl-D-erythritol 4-phosphate (MEP). In Enterobacter sp. (strain 638), this protein is 2-C-methyl-D-erythritol 4-phosphate cytidylyltransferase.